Reading from the N-terminus, the 421-residue chain is D-amino acid dehydrogenase (421 aa).

FAD is bound at residue 3–17; the sequence is VLVLGGGVVGVTSAY.

Belongs to the DadA oxidoreductase family. FAD is required as a cofactor.

It carries out the reaction a D-alpha-amino acid + A + H2O = a 2-oxocarboxylate + AH2 + NH4(+). Its pathway is amino-acid degradation; D-alanine degradation; NH(3) and pyruvate from D-alanine: step 1/1. In terms of biological role, oxidative deamination of D-amino acids. In Methylobacterium sp. (strain 4-46), this protein is D-amino acid dehydrogenase.